Reading from the N-terminus, the 179-residue chain is MNRLKAKYQDEIVKVMMEKFNYTSVMQAPKVDKIVINMGVGDAVTNTKALDMAVEELQLLTGQKPLITKAKKSIAGFKLREGMPIGAKVTLRGERMYEFLDKLINVSLPRVRDFRGVSKKSFDGRGNYTLGVKEQLIFPEIDYDRVSKVRGMDIVIVTTANTDEESRELLTALGMPFQK.

The protein belongs to the universal ribosomal protein uL5 family. As to quaternary structure, part of the 50S ribosomal subunit; part of the 5S rRNA/L5/L18/L25 subcomplex. Contacts the 5S rRNA and the P site tRNA. Forms a bridge to the 30S subunit in the 70S ribosome.

Functionally, this is one of the proteins that bind and probably mediate the attachment of the 5S RNA into the large ribosomal subunit, where it forms part of the central protuberance. In the 70S ribosome it contacts protein S13 of the 30S subunit (bridge B1b), connecting the 2 subunits; this bridge is implicated in subunit movement. Contacts the P site tRNA; the 5S rRNA and some of its associated proteins might help stabilize positioning of ribosome-bound tRNAs. The polypeptide is Large ribosomal subunit protein uL5 (Exiguobacterium sibiricum (strain DSM 17290 / CCUG 55495 / CIP 109462 / JCM 13490 / 255-15)).